We begin with the raw amino-acid sequence, 619 residues long: Pentatricopeptide repeat-containing protein At3g22470, mitochondrial (619 aa).

The transit peptide at 1 to 28 directs the protein to the mitochondrion; sequence MIQRLIPLNRKASNFTQILEKGTSLLHY. PPR repeat units lie at residues 69-103, 104-138, 139-173, 174-208, 209-243, 244-278, 279-313, 314-348, 349-383, 384-418, 419-453, 454-488, 489-523, 524-558, and 559-593; these read TPIDFNRLCSAVARTKQYDLVLGFCKGMELNGIEH, DMYTMTIMINCYCRKKKLLFAFSVLGRAWKLGYEP, DTITFSTLVNGFCLEGRVSEAVALVDRMVEMKQRP, DLVTVSTLINGLCLKGRVSEALVLIDRMVEYGFQP, DEVTYGPVLNRLCKSGNSALALDLFRKMEERNIKA, SVVQYSIVIDSLCKDGSFDDALSLFNEMEMKGIKA, DVVTYSSLIGGLCNDGKWDDGAKMLREMIGRNIIP, DVVTFSALIDVFVKEGKLLEAKELYNEMITRGIAP, DTITYNSLIDGFCKENCLHEANQMFDLMVSKGCEP, DIVTYSILINSYCKAKRVDDGMRLFREISSKGLIP, NTITYNTLVLGFCQSGKLNAAKELFQEMVSRGVPP, SVVTYGILLDGLCDNGELNKALEIFEKMQKSRMTL, GIGIYNIIIHGMCNASKVDDAWSLFCSLSDKGVKP, DVVTYNVMIGGLCKKGSLSEADMLFRKMKEDGCTP, and DDFTYNILIRAHLGGSGLISSVELIEEMKVCGFSA.

This sequence belongs to the PPR family. P subfamily.

The protein localises to the mitochondrion. The polypeptide is Pentatricopeptide repeat-containing protein At3g22470, mitochondrial (Arabidopsis thaliana (Mouse-ear cress)).